We begin with the raw amino-acid sequence, 500 residues long: Lysine--tRNA ligase (500 aa).

Mg(2+)-binding residues include Glu410 and Glu417.

The protein belongs to the class-II aminoacyl-tRNA synthetase family. As to quaternary structure, homodimer. The cofactor is Mg(2+).

The protein localises to the cytoplasm. The catalysed reaction is tRNA(Lys) + L-lysine + ATP = L-lysyl-tRNA(Lys) + AMP + diphosphate. This Pseudomonas fluorescens (strain ATCC BAA-477 / NRRL B-23932 / Pf-5) protein is Lysine--tRNA ligase.